The chain runs to 285 residues: RNA exonuclease 4 (285 aa).

The segment covering 1–14 (MAKLSQNWKKLSSK) has biased composition (polar residues). The segment at 1-35 (MAKLSQNWKKLSSKIQDKPKNGSVKKPTLKGKISK) is disordered. Residues 116-267 (YVAIDCEFVG…EDARATMLLF (152 aa)) enclose the Exonuclease domain.

The protein belongs to the REXO4 family.

The protein localises to the nucleus. Functionally, exoribonuclease involved in ribosome biosynthesis. Involved in the processing of ITS1, the internal transcribed spacer localized between the 18S and 5.8S rRNAs. The chain is RNA exonuclease 4 (REX4) from Candida albicans (strain SC5314 / ATCC MYA-2876) (Yeast).